We begin with the raw amino-acid sequence, 159 residues long: Photosystem II extrinsic protein U, chloroplastic (159 aa).

Belongs to the PsbU family. As to quaternary structure, PSII is composed of 1 copy each of membrane proteins PsbA, PsbB, PsbC, PsbD, PsbE, PsbF, PsbH, PsbI, PsbJ, PsbK, PsbL, PsbM, PsbT, PsbX, PsbY, PsbZ, Psb30/Ycf12, at least 3 peripheral proteins of the oxygen-evolving complex and a large number of cofactors. It forms dimeric complexes. Part of the oxygen-evolving complex of photosystem II.

The protein localises to the plastid. It localises to the chloroplast thylakoid membrane. Functionally, one of the extrinsic, lumenal subunits of photosystem II (PSII). PSII is a light-driven water plastoquinone oxidoreductase, using light energy to abstract electrons from H(2)O, generating a proton gradient subsequently used for ATP formation. The extrinsic proteins stabilize the structure of photosystem II oxygen-evolving complex (OEC), the ion environment of oxygen evolution and protect the OEC against heat-induced inactivation. The polypeptide is Photosystem II extrinsic protein U, chloroplastic (Karenia brevis (Red tide dinoflagellate)).